The sequence spans 203 residues: MQNAPESVLNALVPMVVEQTAKGERSYDIYSRLLKERVIFLVGQVEEHMANLIVAQLLFLESESPDKDIYLYINSPGGSVTAGMAIYDTMQFIKPNVSTVCIGQAASMGAFLLAGGAEGKRHCLPNSRVMIHQPLGGFQGQASDIAIHAQEILGIKNKLNQMLADHTGQPMEIIERDTDRDNFMSAAEAAEYGLVDSVLSKRG.

Ser107 serves as the catalytic Nucleophile. His132 is an active-site residue.

Belongs to the peptidase S14 family. In terms of assembly, fourteen ClpP subunits assemble into 2 heptameric rings which stack back to back to give a disk-like structure with a central cavity, resembling the structure of eukaryotic proteasomes.

The protein localises to the cytoplasm. It carries out the reaction Hydrolysis of proteins to small peptides in the presence of ATP and magnesium. alpha-casein is the usual test substrate. In the absence of ATP, only oligopeptides shorter than five residues are hydrolyzed (such as succinyl-Leu-Tyr-|-NHMec, and Leu-Tyr-Leu-|-Tyr-Trp, in which cleavage of the -Tyr-|-Leu- and -Tyr-|-Trp bonds also occurs).. Functionally, cleaves peptides in various proteins in a process that requires ATP hydrolysis. Has a chymotrypsin-like activity. Plays a major role in the degradation of misfolded proteins. This chain is ATP-dependent Clp protease proteolytic subunit, found in Shewanella sediminis (strain HAW-EB3).